The following is a 512-amino-acid chain: Serine--tRNA ligase, cytoplasmic (512 aa).

M1 bears the N-acetylmethionine mark. Residues 9-61 (RVDKGGDPALIRETQEKRFKDPGLVDQLVKADSEWRRCRFRADNLNKLKNLCS) form an interaction with tRNA region. S241 is modified (phosphoserine). L-serine contacts are provided by T271 and R302. ATP is bound by residues 302–304 (RQE) and 318–321 (VHQF). K323 bears the N6-acetyllysine mark. E325 contributes to the L-serine binding site. An ATP-binding site is contributed by 391 to 394 (ELVS). N427 is an L-serine binding site. The segment at 472–512 (KPAPIDQEPSKKQKKQHEGSKKKAKEVTLENQLQNMEVTEA) is disordered. Residues 479–499 (EPSKKQKKQHEGSKKKAKEVT) show a composition bias toward basic and acidic residues. The short motif at 482-494 (KKQKKQHEGSKKK) is the Nuclear localization signal element. Positions 500 to 512 (LENQLQNMEVTEA) are enriched in polar residues.

This sequence belongs to the class-II aminoacyl-tRNA synthetase family. Type-1 seryl-tRNA synthetase subfamily. Homodimer. The tRNA molecule may bind across the dimer. Interacts with SIRT2. Interacts with METTL6; interaction is required for the tRNA N(3)-methylcytidine methyltransferase activity of METTL6.

The protein localises to the cytoplasm. The protein resides in the nucleus. It catalyses the reaction tRNA(Ser) + L-serine + ATP = L-seryl-tRNA(Ser) + AMP + diphosphate + H(+). The enzyme catalyses tRNA(Sec) + L-serine + ATP = L-seryl-tRNA(Sec) + AMP + diphosphate + H(+). It participates in aminoacyl-tRNA biosynthesis; selenocysteinyl-tRNA(Sec) biosynthesis; L-seryl-tRNA(Sec) from L-serine and tRNA(Sec): step 1/1. Its function is as follows. Catalyzes the attachment of serine to tRNA(Ser) in a two-step reaction: serine is first activated by ATP to form Ser-AMP and then transferred to the acceptor end of tRNA(Ser). Is probably also able to aminoacylate tRNA(Sec) with serine, to form the misacylated tRNA L-seryl-tRNA(Sec), which will be further converted into selenocysteinyl-tRNA(Sec). In the nucleus, binds to the VEGFA core promoter and prevents MYC binding and transcriptional activation by MYC. Recruits SIRT2 to the VEGFA promoter, promoting deacetylation of histone H4 at 'Lys-16' (H4K16). Thereby, inhibits the production of VEGFA and sprouting angiogenesis mediated by VEGFA. The polypeptide is Serine--tRNA ligase, cytoplasmic (Sars1) (Rattus norvegicus (Rat)).